A 176-amino-acid chain; its full sequence is Tubulin polymerization-promoting protein family member 3 (176 aa).

A disordered region spans residues 132 to 151 (TGSHKERFDQTGKGKGKSGR). A compositionally biased stretch (basic and acidic residues) spans 134-151 (SHKERFDQTGKGKGKSGR).

Belongs to the TPPP family.

The protein resides in the cytoplasm. The protein localises to the cytoskeleton. Regulator of microtubule dynamic that has microtubule bundling activity. The sequence is that of Tubulin polymerization-promoting protein family member 3 (tppp3) from Xenopus laevis (African clawed frog).